Reading from the N-terminus, the 356-residue chain is MPPEQGPVVLGIETSCDETGVGLVRNGTLLGEALSTSMDQHARYGGVVPEIAARAHVQALVPCVRAALSSAGLFVADIGAVAVTAGPGLATALHVGVAAAKAYATALDVPLYGVHHLAGHLAADLVDGEPLPDPLIALIVSGGHTSLLRVGDLARDPITHLGDTLDDAAGECFDKVARVLGLPYPGGPAVDRAAVGHDATALAFPRPLTGRADAPYTFSFSGLKTAVARWVESHPDSPVPAGDVIASFQEAVVDVLTAKAVRACLDHGIGDLLIVGGVAANSRLRALAASRCEQTGIRLRIPARRRCTDNGVMIAALGDLLVRAGAEPSPAELTAMPGAFLERAQLGTALPALHAA.

Residues H116 and H120 each contribute to the Fe cation site. Substrate contacts are provided by residues 139 to 143 (IVSGG), D174, G187, D191, and N281. D309 is a binding site for Fe cation.

The protein belongs to the KAE1 / TsaD family. The cofactor is Fe(2+).

It is found in the cytoplasm. It catalyses the reaction L-threonylcarbamoyladenylate + adenosine(37) in tRNA = N(6)-L-threonylcarbamoyladenosine(37) in tRNA + AMP + H(+). Required for the formation of a threonylcarbamoyl group on adenosine at position 37 (t(6)A37) in tRNAs that read codons beginning with adenine. Is involved in the transfer of the threonylcarbamoyl moiety of threonylcarbamoyl-AMP (TC-AMP) to the N6 group of A37, together with TsaE and TsaB. TsaD likely plays a direct catalytic role in this reaction. In Frankia casuarinae (strain DSM 45818 / CECT 9043 / HFP020203 / CcI3), this protein is tRNA N6-adenosine threonylcarbamoyltransferase.